The following is a 227-amino-acid chain: Phosphoribosylformylglycinamidine synthase subunit PurQ (227 aa).

Positions 3 to 225 (FAVIVFPGSN…LKQWRETYVV (223 aa)) constitute a Glutamine amidotransferase type-1 domain. The Nucleophile role is filled by cysteine 86. Catalysis depends on residues histidine 194 and glutamate 196.

Part of the FGAM synthase complex composed of 1 PurL, 1 PurQ and 2 PurS subunits.

The protein localises to the cytoplasm. It catalyses the reaction N(2)-formyl-N(1)-(5-phospho-beta-D-ribosyl)glycinamide + L-glutamine + ATP + H2O = 2-formamido-N(1)-(5-O-phospho-beta-D-ribosyl)acetamidine + L-glutamate + ADP + phosphate + H(+). The catalysed reaction is L-glutamine + H2O = L-glutamate + NH4(+). It participates in purine metabolism; IMP biosynthesis via de novo pathway; 5-amino-1-(5-phospho-D-ribosyl)imidazole from N(2)-formyl-N(1)-(5-phospho-D-ribosyl)glycinamide: step 1/2. Part of the phosphoribosylformylglycinamidine synthase complex involved in the purines biosynthetic pathway. Catalyzes the ATP-dependent conversion of formylglycinamide ribonucleotide (FGAR) and glutamine to yield formylglycinamidine ribonucleotide (FGAM) and glutamate. The FGAM synthase complex is composed of three subunits. PurQ produces an ammonia molecule by converting glutamine to glutamate. PurL transfers the ammonia molecule to FGAR to form FGAM in an ATP-dependent manner. PurS interacts with PurQ and PurL and is thought to assist in the transfer of the ammonia molecule from PurQ to PurL. The protein is Phosphoribosylformylglycinamidine synthase subunit PurQ of Bacillus cereus (strain Q1).